A 377-amino-acid chain; its full sequence is Molybdenum import ATP-binding protein ModC (377 aa).

Residues I4–D240 form the ABC transporter domain. G38 to S45 provides a ligand contact to ATP. Residues R299–R369 enclose the Mop domain.

This sequence belongs to the ABC transporter superfamily. Molybdate importer (TC 3.A.1.8) family. In terms of assembly, the complex is composed of two ATP-binding proteins (ModC), two transmembrane proteins (ModB) and a solute-binding protein (ModA).

It localises to the cell inner membrane. It carries out the reaction molybdate(out) + ATP + H2O = molybdate(in) + ADP + phosphate + H(+). Its function is as follows. Part of the ABC transporter complex ModABC involved in molybdenum import. Responsible for energy coupling to the transport system. The polypeptide is Molybdenum import ATP-binding protein ModC (Rhodopseudomonas palustris (strain HaA2)).